Consider the following 287-residue polypeptide: MAYISGKTMLENAYKEGYGVGAFSAHNAETIQGILEAAEQMKSPIMIQVGQKVIQNVGLEPMKALIDIYMKDVTVPVAVHLDHCRDLGQAMKAIQLGFQSVMFDGSALSFEENAEKTKLVADAASHLGIGSEGEIGKIGGTEDDITVDEKDAQITSEEEALAFADRSRVDYLALSIGTAHGIYKQEPELAFDRIEEISKSLNKPLVMHGGSDVPDADVKKAIGLGIAKINVDTELRVAFTEGMKQCLQDNPNEYHLAHSLGAGKEAMIDKVKEKIRVFGSENKARTY.

Aspartate 82 functions as the Proton donor in the catalytic mechanism. 2 residues coordinate Zn(2+): histidine 83 and histidine 180. Glycine 181 provides a ligand contact to dihydroxyacetone phosphate. Zn(2+) is bound at residue histidine 208. Dihydroxyacetone phosphate contacts are provided by residues 209–211 (GGS) and 230–233 (NVDT).

This sequence belongs to the class II fructose-bisphosphate aldolase family. Zn(2+) serves as cofactor.

It catalyses the reaction 6-deoxy-6-sulfo-D-fructose 1-phosphate = (2S)-3-sulfolactaldehyde + dihydroxyacetone phosphate. Its function is as follows. Part of the sulfo-EMP2 pathway, a D-sulfoquinovose degradation pathway that produces sulfolactate (SL). Cleaves 6-deoxy-6-sulfo-D-fructose 1-phosphate (SFP) to form dihydroxyacetone phosphate (DHAP) and 3-sulfolactaldehyde (SLA). The protein is Sulfofructosephosphate aldolase of Alkalicoccus urumqiensis (Bacillus urumqiensis).